Consider the following 87-residue polypeptide: Large ribosomal subunit protein bL27 (87 aa).

Belongs to the bacterial ribosomal protein bL27 family.

This chain is Large ribosomal subunit protein bL27, found in Pseudarthrobacter chlorophenolicus (strain ATCC 700700 / DSM 12829 / CIP 107037 / JCM 12360 / KCTC 9906 / NCIMB 13794 / A6) (Arthrobacter chlorophenolicus).